A 40-amino-acid chain; its full sequence is Sapecin-C (40 aa).

Cystine bridges form between Cys3/Cys30, Cys16/Cys36, and Cys20/Cys38.

Belongs to the invertebrate defensin family. Type 1 subfamily. In terms of tissue distribution, hemocytes and fat body.

It is found in the secreted. In terms of biological role, sapecins, which are potent bactericidal proteins, are produced in response to injury. Sapecin C is cytotoxic to Gram-positive bacteria. The protein is Sapecin-C of Sarcophaga peregrina (Flesh fly).